The primary structure comprises 455 residues: Protein king tubby (455 aa).

Residues 35-92 form a disordered region; that stretch reads RPMSGMRGNSRELHAYDGPMQFIGSPHNPDQILSNNSSSVHLSSSMNSSRNNSNNLRS. The segment covering 67 to 92 has biased composition (low complexity); it reads LSNNSSSVHLSSSMNSSRNNSNNLRS. Phosphoserine is present on S144.

This sequence belongs to the TUB family.

The protein resides in the cytoplasm. Its subcellular location is the nucleus. The protein localises to the cell projection. It is found in the cilium membrane. It localises to the rhabdomere. The chain is Protein king tubby from Drosophila virilis (Fruit fly).